A 1057-amino-acid polypeptide reads, in one-letter code: Carbamoyl phosphate synthase large chain (1057 aa).

The tract at residues 1 to 401 (MPKRNDIKTI…SLLKAIRSLE (401 aa)) is carboxyphosphate synthetic domain. ATP is bound by residues Arg129, Arg169, Gly175, Gly176, Lys208, Ile210, Glu215, Gly241, Ile242, His243, Gln284, and Glu298. Residues 133 to 327 (RTLMNDLNVP…IAKLAAKIAV (195 aa)) form the ATP-grasp 1 domain. Residues Gln284, Glu298, and Asn300 each contribute to the Mg(2+) site. Positions 284, 298, and 300 each coordinate Mn(2+). The interval 402-546 (YGVHHLGLPN…YGTYETENES (145 aa)) is oligomerization domain. The tract at residues 547–929 (IVTDKEKILV…ALFKGLTGSG (383 aa)) is carbamoyl phosphate synthetic domain. In terms of domain architecture, ATP-grasp 2 spans 671 to 861 (EALLRKINVP…MAQLAMRAII (191 aa)). ATP is bound by residues Arg707, Arg746, Leu748, Glu752, Gly777, Val778, His779, Ser780, Gln820, and Glu832. Residues Gln820, Glu832, and Asn834 each contribute to the Mg(2+) site. Mn(2+) contacts are provided by Gln820, Glu832, and Asn834. In terms of domain architecture, MGS-like spans 930–1057 (VEVKDHGTVL…ESMTFTMRQM (128 aa)). Residues 930 to 1057 (VEVKDHGTVL…ESMTFTMRQM (128 aa)) are allosteric domain.

The protein belongs to the CarB family. Composed of two chains; the small (or glutamine) chain promotes the hydrolysis of glutamine to ammonia, which is used by the large (or ammonia) chain to synthesize carbamoyl phosphate. Tetramer of heterodimers (alpha,beta)4. It depends on Mg(2+) as a cofactor. Requires Mn(2+) as cofactor.

It catalyses the reaction hydrogencarbonate + L-glutamine + 2 ATP + H2O = carbamoyl phosphate + L-glutamate + 2 ADP + phosphate + 2 H(+). The catalysed reaction is hydrogencarbonate + NH4(+) + 2 ATP = carbamoyl phosphate + 2 ADP + phosphate + 2 H(+). It participates in amino-acid biosynthesis; L-arginine biosynthesis; carbamoyl phosphate from bicarbonate: step 1/1. Its pathway is pyrimidine metabolism; UMP biosynthesis via de novo pathway; (S)-dihydroorotate from bicarbonate: step 1/3. Functionally, large subunit of the glutamine-dependent carbamoyl phosphate synthetase (CPSase). CPSase catalyzes the formation of carbamoyl phosphate from the ammonia moiety of glutamine, carbonate, and phosphate donated by ATP, constituting the first step of 2 biosynthetic pathways, one leading to arginine and/or urea and the other to pyrimidine nucleotides. The large subunit (synthetase) binds the substrates ammonia (free or transferred from glutamine from the small subunit), hydrogencarbonate and ATP and carries out an ATP-coupled ligase reaction, activating hydrogencarbonate by forming carboxy phosphate which reacts with ammonia to form carbamoyl phosphate. The sequence is that of Carbamoyl phosphate synthase large chain from Staphylococcus aureus (strain MRSA252).